The chain runs to 357 residues: N-acetyl-gamma-glutamyl-phosphate reductase (357 aa).

Residue Cys160 is part of the active site.

The protein belongs to the NAGSA dehydrogenase family. Type 1 subfamily.

The protein localises to the cytoplasm. It catalyses the reaction N-acetyl-L-glutamate 5-semialdehyde + phosphate + NADP(+) = N-acetyl-L-glutamyl 5-phosphate + NADPH + H(+). The protein operates within amino-acid biosynthesis; L-arginine biosynthesis; N(2)-acetyl-L-ornithine from L-glutamate: step 3/4. In terms of biological role, catalyzes the NADPH-dependent reduction of N-acetyl-5-glutamyl phosphate to yield N-acetyl-L-glutamate 5-semialdehyde. This Synechococcus sp. (strain CC9605) protein is N-acetyl-gamma-glutamyl-phosphate reductase.